A 458-amino-acid polypeptide reads, in one-letter code: Argininosuccinate lyase (458 aa).

It belongs to the lyase 1 family. Argininosuccinate lyase subfamily.

It is found in the cytoplasm. It catalyses the reaction 2-(N(omega)-L-arginino)succinate = fumarate + L-arginine. The protein operates within amino-acid biosynthesis; L-arginine biosynthesis; L-arginine from L-ornithine and carbamoyl phosphate: step 3/3. The polypeptide is Argininosuccinate lyase (Salmonella paratyphi B (strain ATCC BAA-1250 / SPB7)).